The sequence spans 132 residues: MGRDTIANIITSIRNADMDKKGTVRIASTNITENIVKILLREGFIENVRKHRESNKYFLVSTLRHRRSRKGPYRTILKRISRPGLRIYSNYQRIPRILGGMGIVILSTSRGIMTDREARLEGIGGEILCYIW.

This sequence belongs to the universal ribosomal protein uS8 family. In terms of assembly, part of the 30S ribosomal subunit.

Its subcellular location is the plastid. The protein resides in the chloroplast. Its function is as follows. One of the primary rRNA binding proteins, it binds directly to 16S rRNA central domain where it helps coordinate assembly of the platform of the 30S subunit. This is Small ribosomal subunit protein uS8c (rps8) from Buxus microphylla (Littleleaf boxwood).